Here is a 287-residue protein sequence, read N- to C-terminus: uncharacterized protein (287 aa).

The first 20 residues, 1–20, serve as a signal peptide directing secretion; that stretch reads MKVICGSVFLFSLFFQVVLG. Topologically, residues 22 to 201 are extracellular; sequence YFSSSSGNPN…AFYGPRRNIK (180 aa). N-linked (GlcNAc...) asparagine glycans are attached at residues asparagine 120, asparagine 154, and asparagine 166. The chain crosses the membrane as a helical span at residues 202 to 222; it reads AAIAVPSVILGLILVALVYYA. Residues 223–287 are Cytoplasmic-facing; that stretch reads YRKDTWKIYM…YYQSQVKKFH (65 aa).

It localises to the membrane. This is an uncharacterized protein from Schizosaccharomyces pombe (strain 972 / ATCC 24843) (Fission yeast).